The primary structure comprises 606 residues: Elongation factor 4 (606 aa).

A tr-type G domain is found at 10–192 (IRKKNFCIIA…AICKYVPSPR (183 aa)). Residues 22–27 (DHGKST) and 139–142 (NKID) contribute to the GTP site.

The protein belongs to the TRAFAC class translation factor GTPase superfamily. Classic translation factor GTPase family. LepA subfamily.

It is found in the cell inner membrane. The catalysed reaction is GTP + H2O = GDP + phosphate + H(+). Required for accurate and efficient protein synthesis under certain stress conditions. May act as a fidelity factor of the translation reaction, by catalyzing a one-codon backward translocation of tRNAs on improperly translocated ribosomes. Back-translocation proceeds from a post-translocation (POST) complex to a pre-translocation (PRE) complex, thus giving elongation factor G a second chance to translocate the tRNAs correctly. Binds to ribosomes in a GTP-dependent manner. The chain is Elongation factor 4 from Borreliella burgdorferi (strain ATCC 35210 / DSM 4680 / CIP 102532 / B31) (Borrelia burgdorferi).